Reading from the N-terminus, the 428-residue chain is Gamma-glutamyl phosphate reductase (428 aa).

This sequence belongs to the gamma-glutamyl phosphate reductase family.

Its subcellular location is the cytoplasm. The catalysed reaction is L-glutamate 5-semialdehyde + phosphate + NADP(+) = L-glutamyl 5-phosphate + NADPH + H(+). Its pathway is amino-acid biosynthesis; L-proline biosynthesis; L-glutamate 5-semialdehyde from L-glutamate: step 2/2. Its function is as follows. Catalyzes the NADPH-dependent reduction of L-glutamate 5-phosphate into L-glutamate 5-semialdehyde and phosphate. The product spontaneously undergoes cyclization to form 1-pyrroline-5-carboxylate. The chain is Gamma-glutamyl phosphate reductase from Chromohalobacter salexigens (strain ATCC BAA-138 / DSM 3043 / CIP 106854 / NCIMB 13768 / 1H11).